We begin with the raw amino-acid sequence, 1365 residues long: ATP-dependent RNA helicase DHX29 (1365 aa).

Over residues 1–10 (MGGKNKKHKA) the composition is skewed to basic residues. Disordered regions lie at residues 1 to 74 (MGGK…NDSG), 174 to 222 (SQEF…EETT), and 235 to 257 (AEQQ…EKFD). 2 stretches are compositionally biased toward low complexity: residues 11–36 (PGAA…VGEA) and 43–53 (ARPAPAVPTGA). Ser-69, Ser-190, and Ser-198 each carry phosphoserine. Residues 187-203 (KFQSVQIQATLSPPQQT) are compositionally biased toward polar residues. Over residues 206–222 (KRQEEDPKIKPKKEETT) the composition is skewed to basic and acidic residues. The stretch at 281 to 308 (LEKNKQGQKEAQEKIRKFQREMETLEDH) forms a coiled coil. The tract at residues 500–524 (QQQQQQQQRPESEKGGSEDPEESWE) is disordered. A Helicase ATP-binding domain is found at 581–754 (VETLKRHRVV…FTHCPILRIS (174 aa)). Position 594-601 (594-601 (GETGSGKS)) interacts with ATP. The DEAH box signature appears at 701-704 (DEVH). Residues 848-1025 (LILELLVYLD…ELCLHIMKCD (178 aa)) enclose the Helicase C-terminal domain.

Belongs to the DEAD box helicase family. DEAH subfamily. Part of the 43S pre-initiation complex (PIC) that contains at least Met-tRNA, EIF1, EIF1A (EIF1AX or EIF1AY), EIF2S1, EIF2S2, EIF2S3, EIF3A, EIF3B, EIF3C, EIF3D, EIF3E, EIF3F, EIF3G, EIF3H, EIF3I, EIF3J, EIF3K, EIF3L, EIF3M, DHX29 and the 40S ribosomal subunit.

The protein resides in the cytoplasm. It carries out the reaction ATP + H2O = ADP + phosphate + H(+). ATP-binding RNA helicase involved in translation initiation. Part of the 43S pre-initiation complex that is required for efficient initiation on mRNAs of higher eukaryotes with structured 5'-UTRs by promoting efficient NTPase-dependent 48S complex formation. Specifically binds to the 40S ribosome near the mRNA entrance. Does not possess a processive helicase activity. The sequence is that of ATP-dependent RNA helicase DHX29 from Mus musculus (Mouse).